The primary structure comprises 566 residues: Nitrate/nitrite sensor protein NarQ (566 aa).

Topologically, residues 1–13 (MIVKRPVSASLAR) are cytoplasmic. Residues 14-34 (AFFYIVLLSILSTGIALLTLA) traverse the membrane as a helical segment. At 35 to 146 (SSLRDAEAIN…LALQHYAERK (112 aa)) the chain is on the periplasmic side. Residues 147 to 167 (MLLVVAISLAGGIGIFTLVFF) form a helical membrane-spanning segment. Residues 168 to 566 (TLRRIRHQVV…SAEGEESQLM (399 aa)) are Cytoplasmic-facing. The region spanning 174 to 227 (HQVVAPLNQLVTASQRIEHGQFDSPPLDTNLPNELGLLAKTFNQMSSELHKLYR) is the HAMP domain. A Histidine kinase domain is found at 364-559 (TIARELHDSL…LVSISFRSAE (196 aa)). Histidine 370 is subject to Phosphohistidine; by autocatalysis.

It localises to the cell inner membrane. The enzyme catalyses ATP + protein L-histidine = ADP + protein N-phospho-L-histidine.. Acts as a sensor for nitrate/nitrite and transduces signal of nitrate/nitrite availability to the NarL/NarP proteins. NarQ probably activates NarL and NarP by phosphorylation. NarQ probably negatively regulates the NarL protein by dephosphorylation. This Escherichia coli (strain K12) protein is Nitrate/nitrite sensor protein NarQ (narQ).